Here is an 887-residue protein sequence, read N- to C-terminus: Chaperone protein ClpB 2 (887 aa).

One can recognise a Clp R domain in the interval 6–147 (PTKFTDKAWE…AATVKAIRGA (142 aa)). 2 repeat regions span residues 9–73 (FTDK…ARQQ) and 84–147 (CGRS…IRGA). The tract at residues 160 to 342 (AALEKYGRDL…RRFQQVYIGQ (183 aa)) is NBD1. 207–214 (GEPGVGKT) serves as a coordination point for ATP. Residues 343 to 559 (PSVEDTISIL…IAEIVAKWTG (217 aa)) form a linker region. Positions 393–535 (IDLVDEAAAK…TEAQLLELQA (143 aa)) form a coiled coil. The NBD2 stretch occupies residues 569 to 780 (ERQKLLQLEQ…RIDDVILFHG (212 aa)). 619–626 (GPTGVGKT) is an ATP binding site. The C-terminal stretch occupies residues 781–887 (LGRTELAQIA…TGDRDTVSAS (107 aa)).

The protein belongs to the ClpA/ClpB family. As to quaternary structure, homohexamer. The oligomerization is ATP-dependent.

The protein resides in the cytoplasm. Its function is as follows. Part of a stress-induced multi-chaperone system, it is involved in the recovery of the cell from heat-induced damage, in cooperation with DnaK, DnaJ and GrpE. Acts before DnaK, in the processing of protein aggregates. Protein binding stimulates the ATPase activity; ATP hydrolysis unfolds the denatured protein aggregates, which probably helps expose new hydrophobic binding sites on the surface of ClpB-bound aggregates, contributing to the solubilization and refolding of denatured protein aggregates by DnaK. In Thermosynechococcus vestitus (strain NIES-2133 / IAM M-273 / BP-1), this protein is Chaperone protein ClpB 2 (clpB2).